The chain runs to 288 residues: Protease HtpX homolog (288 aa).

Transmembrane regions (helical) follow at residues 7-27 (TAVL…MLGG) and 29-49 (QGML…YWFS). His-131 lines the Zn(2+) pocket. Glu-132 is a catalytic residue. His-135 lines the Zn(2+) pocket. Transmembrane regions (helical) follow at residues 141–161 (ILIS…ANFA) and 177–197 (IASL…QMSI). Glu-202 is a binding site for Zn(2+).

The protein belongs to the peptidase M48B family. Zn(2+) is required as a cofactor.

The protein localises to the cell inner membrane. This Polynucleobacter necessarius subsp. necessarius (strain STIR1) protein is Protease HtpX homolog.